Here is an 835-residue protein sequence, read N- to C-terminus: Leucine--tRNA ligase (835 aa).

The short motif at 41 to 52 (PYPSGQGLHVGH) is the 'HIGH' region element. A 'KMSKS' region motif is present at residues 611–615 (KMSKS). Residue K614 coordinates ATP.

Belongs to the class-I aminoacyl-tRNA synthetase family.

It is found in the cytoplasm. The catalysed reaction is tRNA(Leu) + L-leucine + ATP = L-leucyl-tRNA(Leu) + AMP + diphosphate. The polypeptide is Leucine--tRNA ligase (Elusimicrobium minutum (strain Pei191)).